Consider the following 402-residue polypeptide: Tyrosine--tRNA ligase (402 aa).

Positions 48-57 (PTGSDIHLGH) match the 'HIGH' region motif. Residues 235-239 (KMSKS) carry the 'KMSKS' region motif. Lys238 is an ATP binding site. Positions 338-402 (AKAFYLVSAV…GKKKFVRLVL (65 aa)) constitute an S4 RNA-binding domain.

Belongs to the class-I aminoacyl-tRNA synthetase family. TyrS type 2 subfamily. Homodimer.

It localises to the cytoplasm. It catalyses the reaction tRNA(Tyr) + L-tyrosine + ATP = L-tyrosyl-tRNA(Tyr) + AMP + diphosphate + H(+). Catalyzes the attachment of tyrosine to tRNA(Tyr) in a two-step reaction: tyrosine is first activated by ATP to form Tyr-AMP and then transferred to the acceptor end of tRNA(Tyr). This chain is Tyrosine--tRNA ligase, found in Synechococcus elongatus (strain ATCC 33912 / PCC 7942 / FACHB-805) (Anacystis nidulans R2).